Here is a 145-residue protein sequence, read N- to C-terminus: D-aminoacyl-tRNA deacylase (145 aa).

The Gly-cisPro motif, important for rejection of L-amino acids signature appears at 137–138 (GP).

It belongs to the DTD family. Homodimer.

It is found in the cytoplasm. It catalyses the reaction glycyl-tRNA(Ala) + H2O = tRNA(Ala) + glycine + H(+). The enzyme catalyses a D-aminoacyl-tRNA + H2O = a tRNA + a D-alpha-amino acid + H(+). An aminoacyl-tRNA editing enzyme that deacylates mischarged D-aminoacyl-tRNAs. Also deacylates mischarged glycyl-tRNA(Ala), protecting cells against glycine mischarging by AlaRS. Acts via tRNA-based rather than protein-based catalysis; rejects L-amino acids rather than detecting D-amino acids in the active site. By recycling D-aminoacyl-tRNA to D-amino acids and free tRNA molecules, this enzyme counteracts the toxicity associated with the formation of D-aminoacyl-tRNA entities in vivo and helps enforce protein L-homochirality. This is D-aminoacyl-tRNA deacylase from Azotobacter vinelandii (strain DJ / ATCC BAA-1303).